A 146-amino-acid polypeptide reads, in one-letter code: Large ribosomal subunit protein uL15 (146 aa).

Over residues 1–13 (MKLHELKPAEGSR) the composition is skewed to basic and acidic residues. The segment at 1 to 51 (MKLHELKPAEGSRKVRNRVGRGIGSGNGKTAGKGHKGQNARSGGGVRLGFE) is disordered. Gly residues-rich tracts occupy residues 21–31 (RGIGSGNGKTA) and 42–51 (SGGGVRLGFE).

The protein belongs to the universal ribosomal protein uL15 family. Part of the 50S ribosomal subunit.

In terms of biological role, binds to the 23S rRNA. The sequence is that of Large ribosomal subunit protein uL15 from Bacillus cereus (strain G9842).